A 102-amino-acid polypeptide reads, in one-letter code: Large ribosomal subunit protein bL21 (102 aa).

The protein belongs to the bacterial ribosomal protein bL21 family. In terms of assembly, part of the 50S ribosomal subunit. Contacts protein L20.

Its function is as follows. This protein binds to 23S rRNA in the presence of protein L20. This Bacillus licheniformis (strain ATCC 14580 / DSM 13 / JCM 2505 / CCUG 7422 / NBRC 12200 / NCIMB 9375 / NCTC 10341 / NRRL NRS-1264 / Gibson 46) protein is Large ribosomal subunit protein bL21.